We begin with the raw amino-acid sequence, 91 residues long: UPF0298 protein spyM18_0447 (91 aa).

Belongs to the UPF0298 family.

It localises to the cytoplasm. The polypeptide is UPF0298 protein spyM18_0447 (Streptococcus pyogenes serotype M18 (strain MGAS8232)).